Here is a 350-residue protein sequence, read N- to C-terminus: Phenylalanine--tRNA ligase alpha subunit (350 aa).

Residue Glu-271 coordinates Mg(2+).

This sequence belongs to the class-II aminoacyl-tRNA synthetase family. Phe-tRNA synthetase alpha subunit type 1 subfamily. Tetramer of two alpha and two beta subunits. Mg(2+) serves as cofactor.

It is found in the cytoplasm. It catalyses the reaction tRNA(Phe) + L-phenylalanine + ATP = L-phenylalanyl-tRNA(Phe) + AMP + diphosphate + H(+). In Delftia acidovorans (strain DSM 14801 / SPH-1), this protein is Phenylalanine--tRNA ligase alpha subunit.